The sequence spans 583 residues: Aspartate--tRNA ligase (583 aa).

Position 174 (Glu174) interacts with L-aspartate. Residues 198–201 (QITK) form an aspartate region. Arg220 is a binding site for L-aspartate. Residues 220 to 222 (RDE) and Gln229 each bind ATP. Residue His443 coordinates L-aspartate. Glu477 serves as a coordination point for ATP. Arg484 lines the L-aspartate pocket. An ATP-binding site is contributed by 529–532 (GLDR).

It belongs to the class-II aminoacyl-tRNA synthetase family. Type 1 subfamily. Homodimer.

It is found in the cytoplasm. It carries out the reaction tRNA(Asp) + L-aspartate + ATP = L-aspartyl-tRNA(Asp) + AMP + diphosphate. Its function is as follows. Catalyzes the attachment of L-aspartate to tRNA(Asp) in a two-step reaction: L-aspartate is first activated by ATP to form Asp-AMP and then transferred to the acceptor end of tRNA(Asp). The sequence is that of Aspartate--tRNA ligase from Streptococcus thermophilus (strain ATCC BAA-250 / LMG 18311).